The following is a 148-amino-acid chain: Large ribosomal subunit protein bL9 (148 aa).

The protein belongs to the bacterial ribosomal protein bL9 family.

Binds to the 23S rRNA. In Syntrophotalea carbinolica (strain DSM 2380 / NBRC 103641 / GraBd1) (Pelobacter carbinolicus), this protein is Large ribosomal subunit protein bL9.